Here is a 131-residue protein sequence, read N- to C-terminus: Cystatin-like cysteine protease inhibitor EPIC3 (131 aa).

The signal sequence occupies residues 1-20 (MAFTRSIALFAGLALAASSA). N33 is a glycosylation site (N-linked (GlcNAc...) asparagine). Residues 71 to 75 (QTVAG) carry the Secondary area of contact motif.

Belongs to the cystatin family.

It localises to the secreted. Functionally, secreted effector that interacts with and inhibits host apoplastic pathogenesis-related papain-like cysteine proteases. Inhibition of host proteases by a pathogen extracellular protease inhibitor forms a specific type of defense-counterdefense mechanism between plants and microbial pathogens. The protein is Cystatin-like cysteine protease inhibitor EPIC3 of Phytophthora infestans (Potato late blight agent).